Consider the following 96-residue polypeptide: Protein Vpr (96 aa).

The homooligomerization stretch occupies residues 1 to 42; the sequence is MEQAPEDQGPQREPYNEWTLELLRKLKSEAVRHFPRIWLHGL. Ser-79, Ser-94, and Ser-96 each carry phosphoserine; by host.

It belongs to the HIV-1 VPR protein family. Homooligomer, may form homodimer. Interacts with p6-gag region of the Pr55 Gag precursor protein through a (Leu-X-X)4 motif near the C-terminus of the P6gag protein. Interacts with host UNG. May interact with host RAD23A/HHR23A. Interacts with host VPRBP/DCAF1, leading to hijack the CUL4A-RBX1-DDB1-DCAF1/VPRBP complex, mediating ubiquitination of host proteins such as TERT and ZGPAT and arrest of the cell cycle in G2 phase. In terms of processing, phosphorylated on several residues by host. These phosphorylations regulate VPR activity for the nuclear import of the HIV-1 pre-integration complex.

The protein resides in the virion. It localises to the host nucleus. It is found in the host extracellular space. Functionally, during virus replication, may deplete host UNG protein, and incude G2-M cell cycle arrest. Acts by targeting specific host proteins for degradation by the 26S proteasome, through association with the cellular CUL4A-DDB1 E3 ligase complex by direct interaction with host VPRPB/DCAF-1. Cell cycle arrest reportedly occurs within hours of infection and is not blocked by antiviral agents, suggesting that it is initiated by the VPR carried into the virion. Additionally, VPR induces apoptosis in a cell cycle dependent manner suggesting that these two effects are mechanistically linked. Detected in the serum and cerebrospinal fluid of AIDS patient, VPR may also induce cell death to bystander cells. In terms of biological role, during virus entry, plays a role in the transport of the viral pre-integration (PIC) complex to the host nucleus. This function is crucial for viral infection of non-dividing macrophages. May act directly at the nuclear pore complex, by binding nucleoporins phenylalanine-glycine (FG)-repeat regions. The chain is Protein Vpr from Homo sapiens (Human).